A 24-amino-acid polypeptide reads, in one-letter code: Brevinin-1Ra (24 aa).

A disulfide bridge connects residues cysteine 18 and cysteine 24.

Expressed by the skin glands.

Its subcellular location is the secreted. Functionally, antimicrobial peptide. This chain is Brevinin-1Ra, found in Pelophylax ridibundus (Marsh frog).